A 236-amino-acid chain; its full sequence is Penton protein H240R (236 aa).

It belongs to the asfivirus H240R family.

It is found in the virion. Forms the penton at the fivefold vertices of the icosahedral capsid. Together with the minor capsid proteins (p17, p49, and M1249L), forms a complicated network immediately below the outer capsid shell, stabilizing the whole capsid. The protein is Penton protein H240R of African swine fever virus (isolate Warthog/Namibia/Wart80/1980) (ASFV).